The primary structure comprises 102 residues: MMKKRQMVIKQRSRNSNTSSSWTTTSSSSSSSEISNVRYVECQKNHAANIGGYAVDGCREFMAAGVEGTVDALRCAACGCHRNFHRKEVDTEVVCEYSPPNA.

Basic residues predominate over residues 1 to 13 (MMKKRQMVIKQRS). Residues 1-34 (MMKKRQMVIKQRSRNSNTSSSWTTTSSSSSSSEI) are disordered. Residues 14 to 32 (RNSNTSSSWTTTSSSSSSS) are compositionally biased toward low complexity. A ZF-HD dimerization-type; degenerate zinc finger spans residues 39 to 88 (YVECQKNHAANIGGYAVDGCREFMAAGVEGTVDALRCAACGCHRNFHRKE).

As to quaternary structure, homo- and heterodimers. Interacts with ZHD1, ZHD5, ZHD6, ZHD7, ZHD8, ZHD10 and ZHD13. Mostly expressed in roots and stems, present in siliques and seedlings, and weakly observed in petioles, leaves and flowers.

The protein localises to the cytoplasm. Inhibits zinc finger homeodomain (ZHD) transcription factors, such as ZHD5, by interacting with them to prevent both their nuclear localization and their DNA-binding properties. Involved in integrating signals from multiple hormones by preventing the expression of genes involved in gibberellic acid (GA), auxin and brassinosteroid signaling and by promoting the expression of abscisic acid (ABA)-responsive genes. Regulates several development aspects, including photomorphogenesis, apical dominance, longevity, flower morphology and fertility, as well as root and stem elongation. Promotes the formation of ectopic shoot meristems on leaf margins. This is Mini zinc finger protein 1 (MIF1) from Arabidopsis thaliana (Mouse-ear cress).